We begin with the raw amino-acid sequence, 364 residues long: MAQQTPLYEQHTLCGARMVDFHGWMMPLHYGSQIDEHHEVRTDAGMFDVSHMTIVDLRGSRTREFLRYLLANDVAKLTKSGKALYSGMLNASGGVIDDLIVYYFTEDFFRLVVNSATREKDLSWITQHAEPFGIEITVRDDLSMIAVQGPNAQAKAATLFNDAQRQAVEGMKPFFGVQAGDLFIATTGYTGEAGYEIALPNEKAADFWRALVEGGVKPCGLGARDTLRLEAGMNLYGQEMDETISPLAANMGWTIAWEPADRDFIGREALEVQREHGTEKLVGLVMTEKGVLRNELPVRFTDAQGNQHEGIITSGTFSPTLGYSIALARVPKGIGETAIVQIRNREMPVKVTKPVFVRNGKAVA.

The protein belongs to the GcvT family. The glycine cleavage system is composed of four proteins: P, T, L and H.

It catalyses the reaction N(6)-[(R)-S(8)-aminomethyldihydrolipoyl]-L-lysyl-[protein] + (6S)-5,6,7,8-tetrahydrofolate = N(6)-[(R)-dihydrolipoyl]-L-lysyl-[protein] + (6R)-5,10-methylene-5,6,7,8-tetrahydrofolate + NH4(+). In terms of biological role, the glycine cleavage system catalyzes the degradation of glycine. This chain is Aminomethyltransferase, found in Escherichia coli O157:H7.